The following is a 116-amino-acid chain: uncharacterized protein (116 aa).

Positions 1-19 (MRWDVIILYAISRPYATRR) are cleaved as a signal peptide. Positions 18–50 (RRTGSHTHPRDSRYIAANQRRPPSACRVGPSPA) are disordered.

This is an uncharacterized protein from Saccharomyces cerevisiae (strain ATCC 204508 / S288c) (Baker's yeast).